The following is a 120-amino-acid chain: Glycine cleavage system H protein (120 aa).

The region spanning 17 to 99 is the Lipoyl-binding domain; it reads VATVGITAHA…QGDGWLYRLK (83 aa). Lys-58 carries the N6-lipoyllysine modification.

Belongs to the GcvH family. In terms of assembly, the glycine cleavage system is composed of four proteins: P, T, L and H. Requires (R)-lipoate as cofactor.

Functionally, the glycine cleavage system catalyzes the degradation of glycine. The H protein shuttles the methylamine group of glycine from the P protein to the T protein. This Methylorubrum extorquens (strain PA1) (Methylobacterium extorquens) protein is Glycine cleavage system H protein.